We begin with the raw amino-acid sequence, 433 residues long: Serine/threonine-protein kinase Sgk1 (433 aa).

The tract at residues 66–92 (QDVELMNSNPSPPPSPSQQINLGPSSN) is disordered. A compositionally biased stretch (polar residues) spans 83-92 (QQINLGPSSN). The Protein kinase domain occupies 100–357 (FDFLKVIGKG…FTEIKNHMFF (258 aa)). ATP contacts are provided by residues 106 to 114 (IGKGSFGKV) and Lys129. Asp224 functions as the Proton acceptor in the catalytic mechanism. The AGC-kinase C-terminal domain occupies 358–433 (SPINWDDLNA…SYAPAMDSYL (76 aa)).

The protein belongs to the protein kinase superfamily. AGC Ser/Thr protein kinase family.

Its subcellular location is the cytoplasm. The protein resides in the nucleus. It localises to the endoplasmic reticulum. It catalyses the reaction L-seryl-[protein] + ATP = O-phospho-L-seryl-[protein] + ADP + H(+). The enzyme catalyses L-threonyl-[protein] + ATP = O-phospho-L-threonyl-[protein] + ADP + H(+). In terms of biological role, protein kinase that may play an important role in cellular stress response. May be involved in the regulation of processes such as cell survival, neuronal excitability and renal sodium excretion. This is Serine/threonine-protein kinase Sgk1 (sgk1) from Danio rerio (Zebrafish).